A 178-amino-acid chain; its full sequence is Interleukin-1 receptor antagonist protein (178 aa).

A signal peptide spans 1–26 (MEICRGPYSHLISLLLILLFRSESAG). Cys92 and Cys142 are disulfide-bonded. N-linked (GlcNAc...) asparagine glycosylation occurs at Asn110.

It belongs to the IL-1 family.

It localises to the secreted. In terms of biological role, anti-inflammatory antagonist of interleukin-1 family of proinflammatory cytokines such as interleukin-1beta/IL1B and interleukin-1alpha/IL1A. Protects from immune dysregulation and uncontrolled systemic inflammation triggered by IL1 for a range of innate stimulatory agents such as pathogens. The polypeptide is Interleukin-1 receptor antagonist protein (Il1rn) (Rattus norvegicus (Rat)).